Consider the following 414-residue polypeptide: Probable cell wall biosynthesis protein LcpB (414 aa).

The tract at residues 1-108 (MDSPGQGEIA…PPVIAGDGGR (108 aa)) is disordered. Residues 1-120 (MDSPGQGEIA…KAISFKPRGC (120 aa)) are Cytoplasmic-facing. The segment covering 9-23 (IARDSQGRPILDRYG) has biased composition (basic and acidic residues). Pro residues predominate over residues 33–42 (RQTPPTPRTP). Residues 43–53 (PVNETRVYQPR) are compositionally biased toward low complexity. The span at 54 to 80 (QTPPRQTPPRQTPPRQMPPRQTPPRQV) shows a compositional bias: pro residues. A helical transmembrane segment spans residues 121-141 (LGTIAGVLAVGLVLVFVVTLW). Topologically, residues 142–414 (ADSKLNRVDA…GAEALFSSMR (273 aa)) are periplasmic.

Belongs to the LytR/CpsA/Psr (LCP) family.

It is found in the cell inner membrane. The polypeptide is Probable cell wall biosynthesis protein LcpB (Corynebacterium glutamicum (strain ATCC 13032 / DSM 20300 / JCM 1318 / BCRC 11384 / CCUG 27702 / LMG 3730 / NBRC 12168 / NCIMB 10025 / NRRL B-2784 / 534)).